A 259-amino-acid polypeptide reads, in one-letter code: GTP cyclohydrolase FolE2 (259 aa).

The protein belongs to the GTP cyclohydrolase IV family.

The catalysed reaction is GTP + H2O = 7,8-dihydroneopterin 3'-triphosphate + formate + H(+). It participates in cofactor biosynthesis; 7,8-dihydroneopterin triphosphate biosynthesis; 7,8-dihydroneopterin triphosphate from GTP: step 1/1. Its function is as follows. Converts GTP to 7,8-dihydroneopterin triphosphate. The polypeptide is GTP cyclohydrolase FolE2 (Nitratidesulfovibrio vulgaris (strain DSM 19637 / Miyazaki F) (Desulfovibrio vulgaris)).